The chain runs to 244 residues: 3-deoxy-manno-octulosonate cytidylyltransferase (244 aa).

This sequence belongs to the KdsB family.

It localises to the cytoplasm. It carries out the reaction 3-deoxy-alpha-D-manno-oct-2-ulosonate + CTP = CMP-3-deoxy-beta-D-manno-octulosonate + diphosphate. Its pathway is nucleotide-sugar biosynthesis; CMP-3-deoxy-D-manno-octulosonate biosynthesis; CMP-3-deoxy-D-manno-octulosonate from 3-deoxy-D-manno-octulosonate and CTP: step 1/1. The protein operates within bacterial outer membrane biogenesis; lipopolysaccharide biosynthesis. Activates KDO (a required 8-carbon sugar) for incorporation into bacterial lipopolysaccharide in Gram-negative bacteria. In Dichelobacter nodosus (strain VCS1703A), this protein is 3-deoxy-manno-octulosonate cytidylyltransferase.